Reading from the N-terminus, the 312-residue chain is MIKEGFLIKTPKKLIALLGPSGSGKSALSIELAQELDAEIFSLDSLSIYEDINIASAKPSLKERKNIKHYALDYLNIDEKNNASLFKTLLEDAMRVSSKEILLIVGGSSFYLKSILEGLSGMPKLSDEEVVKIEREIATLSNPYIFLKSIDPNMAFKIHPNDTYRIHKALEIFYATHTPPSEYFKANPKKPFEHAISLFALSVEKNALANNIKQRTKSMLDCGLIEEIKALYIKYPKDSQPFKAIGVKESVLYLEKRLTLKELEEAIISNTMKLAKRQNTFNKTQFNNLYMGSVGEIRHAILKHSKSDTRER.

19 to 26 (GPSGSGKS) is a binding site for ATP. Substrate is bound at residue 21-26 (SGSGKS). Residues 44–47 (DSLS) are interaction with substrate tRNA.

Belongs to the IPP transferase family. In terms of assembly, monomer. The cofactor is Mg(2+).

The catalysed reaction is adenosine(37) in tRNA + dimethylallyl diphosphate = N(6)-dimethylallyladenosine(37) in tRNA + diphosphate. Catalyzes the transfer of a dimethylallyl group onto the adenine at position 37 in tRNAs that read codons beginning with uridine, leading to the formation of N6-(dimethylallyl)adenosine (i(6)A). This Helicobacter pylori (strain J99 / ATCC 700824) (Campylobacter pylori J99) protein is tRNA dimethylallyltransferase.